The following is a 607-amino-acid chain: DNA polymerase (607 aa).

In terms of domain architecture, 3'-5' exonuclease spans methionine 1 to aspartate 213. The polymerase stretch occupies residues valine 214–tyrosine 607.

Belongs to the DNA polymerase type-A family.

The catalysed reaction is DNA(n) + a 2'-deoxyribonucleoside 5'-triphosphate = DNA(n+1) + diphosphate. Its function is as follows. Replicates viral genomic DNA. This polymerase possesses two enzymatic activities: DNA synthesis (polymerase) and an exonucleolytic activity that degrades single-stranded DNA in the 3'-5' direction. The polypeptide is DNA polymerase (44) (Mycobacterium phage D29 (Mycobacteriophage D29)).